The chain runs to 89 residues: ATP synthase subunit e, mitochondrial (89 aa).

Ser-1 carries the post-translational modification N-acetylserine. A helical membrane pass occupies residues 8–25; that stretch reads YSSLAAGIVYGAYHTYTL.

As to quaternary structure, F-type ATP synthases have 2 components, the catalytic core F(1) and the membrane-embedded component F(0), linked together by a central stalk and a peripheral stalk. The central stalk, also called rotor shaft, is often seen as part of F(1). The peripheral stalk is seen as part of F(0). F(0) contains the membrane channel next to the rotor. F-type ATP synthases form dimers but each monomer functions independently in ATP generation. The dimer consists of 18 different polypeptides: ATP1 (subunit alpha, part of F(1), 3 molecules per monomer), ATP2 (subunit beta, part of F(1), 3 molecules per monomer), ATP3 (subunit gamma, part of the central stalk), ATP4 (subunit b, part of the peripheral stalk), ATP5/OSCP (subunit 5/OSCP, part of the peripheral stalk), ATP6 (subunit a, part of the peripheral stalk), ATP7 (subunit d, part of the peripheral stalk), ATP8 (subunit 8, part of the peripheral stalk), OLI1 (subunit c, part of the rotor, 10 molecules per monomer), ATP14 (subunit h, part of the peripheral stalk), ATP15 (subunit epsilon, part of the central stalk), ATP16 (subunit delta, part of the central stalk), ATP17 (subunit f, part of the peripheral stalk), ATP18 (subunit i/j, part of the peripheral stalk). Dimer-specific subunits are ATP19 (subunit k, at interface between monomers), ATP20 (subunit g, at interface between monomers), TIM11 (subunit e, at interface between monomers). Also contains subunit L.

It is found in the mitochondrion inner membrane. Mitochondrial membrane ATP synthase (F(1)F(0) ATP synthase or Complex V) produces ATP from ADP in the presence of a proton gradient across the membrane which is generated by electron transport complexes of the respiratory chain. F-type ATP synthases consist of two structural domains, F(1) - containing the extramembraneous catalytic core, and F(0) - containing the membrane proton channel, linked together by a central stalk and a peripheral stalk. During catalysis, ATP synthesis in the catalytic domain of F(1) is coupled via a rotary mechanism of the central stalk subunits to proton translocation. Part of the complex F(0) domain. Minor subunit located with subunit a/ATP6 in the membrane. Together with subunit g/ATP20, probably contributes to membrane curvature at the site of the ATP synthase dimer, ultimately contributing to formation of cristae. This is ATP synthase subunit e, mitochondrial from Pichia angusta (Yeast).